Here is a 201-residue protein sequence, read N- to C-terminus: Large ribosomal subunit protein uL4 (201 aa).

The interval 44-68 (RAQKSRAEVSGSGRKPWRQKGTGRA) is disordered.

It belongs to the universal ribosomal protein uL4 family. In terms of assembly, part of the 50S ribosomal subunit.

Its function is as follows. One of the primary rRNA binding proteins, this protein initially binds near the 5'-end of the 23S rRNA. It is important during the early stages of 50S assembly. It makes multiple contacts with different domains of the 23S rRNA in the assembled 50S subunit and ribosome. In terms of biological role, forms part of the polypeptide exit tunnel. The polypeptide is Large ribosomal subunit protein uL4 (Buchnera aphidicola subsp. Acyrthosiphon pisum (strain 5A)).